Reading from the N-terminus, the 325-residue chain is MRTEDDSWDVTTSVGSTGLLVAAARALETQKADPLAIDPYAEVFCRAAGGEWADVLDGKLPDHYLTTGDFGEHFVNFQGARTRYFDEYFSRATAAGMKQVVILAAGLDSRAFRLQWPIGTTIFELDRPQVLDFKNAVLADYHIRPRAQRRSVAVDLRDEWQIALCNNGFDANRPSAWIAEGLLVYLSAEAQQRLFIGIDTLASPGSHVAVEEATPLDPCEFAAKLERERAANAQGDPRRFFQMVYNERWARATEWFDERGWRATATPLAEYLRRVGRAVPEADTEAAPMVTAITFVSAVRTGLVADPARTSPSSTSIGFKRFEAD.

S-adenosyl-L-methionine contacts are provided by residues D126 and 155–156 (DL).

It belongs to the UPF0677 family.

Its function is as follows. Exhibits S-adenosyl-L-methionine-dependent methyltransferase activity. This chain is Putative S-adenosyl-L-methionine-dependent methyltransferase MT0917, found in Mycobacterium tuberculosis (strain CDC 1551 / Oshkosh).